The chain runs to 313 residues: MVINRMIGKIAAFRKMPVSDFKFDLNPRIKKRLEIMKENMKGGVMFIPDVGVVWVTPKPSRIISLENEREVGEEILKVVMQKYKTNINFSELGWKLGGMGLENDGFLRTSVKGVDNNQGAVFRVDDPKCWDDIKAAESSMEKNRPKDYPWDSNVDNRDVLDCSSESGCAHIVNQILEENEAVYYSGHGSNYCILIKGEKNSNKINFCSKDVAYGRQTRLFVVSACYAGNGLAEWLVEKWVRCVIADDGELYDYNYWSPCAAWADAFWDRVTGNVDAGYRRTPHEARIETNNLFGWIPRNCNLDVERGDCNFYI.

This is an uncharacterized protein from Archaeoglobus fulgidus (strain ATCC 49558 / DSM 4304 / JCM 9628 / NBRC 100126 / VC-16).